The primary structure comprises 298 residues: Lipoyl synthase (298 aa).

Positions 43, 48, 54, 69, 73, 76, and 280 each coordinate [4Fe-4S] cluster. A Radical SAM core domain is found at 55-269 (FSSGTATFLI…AACGRGMGIP (215 aa)).

It belongs to the radical SAM superfamily. Lipoyl synthase family. The cofactor is [4Fe-4S] cluster.

The protein localises to the cytoplasm. It carries out the reaction [[Fe-S] cluster scaffold protein carrying a second [4Fe-4S](2+) cluster] + N(6)-octanoyl-L-lysyl-[protein] + 2 oxidized [2Fe-2S]-[ferredoxin] + 2 S-adenosyl-L-methionine + 4 H(+) = [[Fe-S] cluster scaffold protein] + N(6)-[(R)-dihydrolipoyl]-L-lysyl-[protein] + 4 Fe(3+) + 2 hydrogen sulfide + 2 5'-deoxyadenosine + 2 L-methionine + 2 reduced [2Fe-2S]-[ferredoxin]. It participates in protein modification; protein lipoylation via endogenous pathway; protein N(6)-(lipoyl)lysine from octanoyl-[acyl-carrier-protein]: step 2/2. Functionally, catalyzes the radical-mediated insertion of two sulfur atoms into the C-6 and C-8 positions of the octanoyl moiety bound to the lipoyl domains of lipoate-dependent enzymes, thereby converting the octanoylated domains into lipoylated derivatives. This chain is Lipoyl synthase, found in Nitratidesulfovibrio vulgaris (strain ATCC 29579 / DSM 644 / CCUG 34227 / NCIMB 8303 / VKM B-1760 / Hildenborough) (Desulfovibrio vulgaris).